The chain runs to 210 residues: Na(+)-translocating NADH-quinone reductase subunit D (210 aa).

The next 6 membrane-spanning stretches (helical) occupy residues 14–34, 42–62, 72–92, 103–123, 131–151, and 178–198; these read PIVN…ALAV, LVMA…ISMI, IIVQ…LLQA, VFVG…AYAM, FMDG…VGFV, and NGLL…IWII.

This sequence belongs to the NqrDE/RnfAE family. As to quaternary structure, composed of six subunits; NqrA, NqrB, NqrC, NqrD, NqrE and NqrF.

Its subcellular location is the cell inner membrane. The enzyme catalyses a ubiquinone + n Na(+)(in) + NADH + H(+) = a ubiquinol + n Na(+)(out) + NAD(+). Its function is as follows. NQR complex catalyzes the reduction of ubiquinone-1 to ubiquinol by two successive reactions, coupled with the transport of Na(+) ions from the cytoplasm to the periplasm. NqrA to NqrE are probably involved in the second step, the conversion of ubisemiquinone to ubiquinol. This is Na(+)-translocating NADH-quinone reductase subunit D from Shewanella oneidensis (strain ATCC 700550 / JCM 31522 / CIP 106686 / LMG 19005 / NCIMB 14063 / MR-1).